We begin with the raw amino-acid sequence, 126 residues long: uncharacterized protein (126 aa).

This is an uncharacterized protein from Columba livia (Rock dove).